A 185-amino-acid polypeptide reads, in one-letter code: Histone H1-delta (185 aa).

2 disordered regions span residues 1-37 (MADTDAAPAAPAPSTPKKAAKKKASKPKTPASHPKYS) and 90-185 (RHVK…GKKK). In terms of domain architecture, H15 spans 32–105 (SHPKYSDMIA…GASGSFLLAE (74 aa)). Positions 109 to 185 (TPKKAAAKKA…KAAKGKGKKK (77 aa)) are enriched in basic residues.

Belongs to the histone H1/H5 family.

It is found in the nucleus. The protein resides in the chromosome. In terms of biological role, histones H1 are necessary for the condensation of nucleosome chains into higher-order structures. The protein is Histone H1-delta of Strongylocentrotus purpuratus (Purple sea urchin).